The following is a 357-amino-acid chain: Glutamine synthetase cytosolic isozyme 1-2 (357 aa).

The 81-residue stretch at 19-99 (IIAEYIWVGG…VMCDCYTPQG (81 aa)) folds into the GS beta-grasp domain. One can recognise a GS catalytic domain in the interval 106–357 (KRHSAAKIFS…AETTLLWKQN (252 aa)).

This sequence belongs to the glutamine synthetase family. Homooctamer. In terms of tissue distribution, expressed in roots and at lower levels in leaf blades and spikelets (rice flower).

It localises to the cytoplasm. The enzyme catalyses L-glutamate + NH4(+) + ATP = L-glutamine + ADP + phosphate + H(+). In terms of biological role, high-affinity glutamine synthetase involved in ammonium assimilation. Plays an important role in the primary assimilation of ammonium taken up by roots. Plays a role in maintaining nitrogen metabolic balance during ammonium assimilation, thus controlling plant growth and development. Reassimilates ammonium generated during lignification within developing tillers, which is probably required for the outgrowth of axillary buds. Required for nitrogen-dependent biosynthesis of cytokinin. Active cytokinin in axillary bud meristem is required for axillary bud outgrowth and necessary for tillering. This chain is Glutamine synthetase cytosolic isozyme 1-2, found in Oryza sativa subsp. japonica (Rice).